The sequence spans 131 residues: Large ribosomal subunit protein bL17 (131 aa).

It belongs to the bacterial ribosomal protein bL17 family. In terms of assembly, part of the 50S ribosomal subunit. Contacts protein L32.

This Azoarcus sp. (strain BH72) protein is Large ribosomal subunit protein bL17.